Here is a 345-residue protein sequence, read N- to C-terminus: Probable 3'(2'),5'-bisphosphate nucleotidase 4 (345 aa).

Residue aspartate 46 is the Proton acceptor of the active site. Positions 71, 134, 136, and 137 each coordinate Mg(2+). The Proton acceptor role is filled by threonine 139. Threonine 139, serine 247, lysine 250, and arginine 264 together coordinate adenosine 3',5'-bisphosphate. Residues serine 247, lysine 250, and arginine 264 each coordinate AMP.

Belongs to the inositol monophosphatase superfamily. The cofactor is Mg(2+).

It catalyses the reaction 3'-phosphoadenylyl sulfate + H2O = adenosine 5'-phosphosulfate + phosphate. The catalysed reaction is adenosine 3',5'-bisphosphate + H2O = AMP + phosphate. The enzyme catalyses adenosine 2',5'-bisphosphate + H2O = AMP + phosphate. It carries out the reaction 1D-myo-inositol 1,4-bisphosphate + H2O = 1D-myo-inositol 4-phosphate + phosphate. It catalyses the reaction 1D-myo-inositol 1,3,4-trisphosphate + H2O = 1D-myo-inositol 3,4-bisphosphate + phosphate. The protein operates within signal transduction; phosphatidylinositol signaling pathway. Its function is as follows. Phosphatase that converts adenosine 3'-phosphate 5'-phosphosulfate (PAPS) to adenosine 5'-phosphosulfate (APS) and 3'(2')-phosphoadenosine 5'-phosphate (PAP) to AMP. Is also able to hydrolyze inositol 1,4-bisphosphate and inositol 1,3,4-trisphosphate. This is Probable 3'(2'),5'-bisphosphate nucleotidase 4 (SAL4) from Arabidopsis thaliana (Mouse-ear cress).